Reading from the N-terminus, the 223-residue chain is Urease accessory protein UreG (223 aa).

The segment at 1 to 31 (MAKHSHDHTHDHHDRPRRVRKPGEPLRIGVG) is disordered. 32–39 (GPVGSGKT) is a GTP binding site.

Belongs to the SIMIBI class G3E GTPase family. UreG subfamily. In terms of assembly, homodimer. UreD, UreF and UreG form a complex that acts as a GTP-hydrolysis-dependent molecular chaperone, activating the urease apoprotein by helping to assemble the nickel containing metallocenter of UreC. The UreE protein probably delivers the nickel.

The protein localises to the cytoplasm. Functionally, facilitates the functional incorporation of the urease nickel metallocenter. This process requires GTP hydrolysis, probably effectuated by UreG. The chain is Urease accessory protein UreG from Mycobacterium marinum (strain ATCC BAA-535 / M).